The sequence spans 887 residues: Bifunctional uridylyltransferase/uridylyl-removing enzyme (887 aa).

The segment at Met1–Glu337 is uridylyltransferase. Residues Val339–Val699 are uridylyl-removing. Residues Val457 to Leu579 form the HD domain. 2 consecutive ACT domains span residues Gln700–Arg782 and Met809–His887.

It belongs to the GlnD family. Requires Mg(2+) as cofactor.

The catalysed reaction is [protein-PII]-L-tyrosine + UTP = [protein-PII]-uridylyl-L-tyrosine + diphosphate. It catalyses the reaction [protein-PII]-uridylyl-L-tyrosine + H2O = [protein-PII]-L-tyrosine + UMP + H(+). With respect to regulation, uridylyltransferase (UTase) activity is inhibited by glutamine, while glutamine activates uridylyl-removing (UR) activity. Its function is as follows. Modifies, by uridylylation and deuridylylation, the PII regulatory proteins (GlnB and homologs), in response to the nitrogen status of the cell that GlnD senses through the glutamine level. Under low glutamine levels, catalyzes the conversion of the PII proteins and UTP to PII-UMP and PPi, while under higher glutamine levels, GlnD hydrolyzes PII-UMP to PII and UMP (deuridylylation). Thus, controls uridylylation state and activity of the PII proteins, and plays an important role in the regulation of nitrogen assimilation and metabolism. This is Bifunctional uridylyltransferase/uridylyl-removing enzyme from Acinetobacter baumannii (strain ACICU).